The primary structure comprises 293 residues: Elongation factor Ts (293 aa).

The segment at 80–83 (TDFV) is involved in Mg(2+) ion dislocation from EF-Tu.

The protein belongs to the EF-Ts family.

The protein resides in the cytoplasm. In terms of biological role, associates with the EF-Tu.GDP complex and induces the exchange of GDP to GTP. It remains bound to the aminoacyl-tRNA.EF-Tu.GTP complex up to the GTP hydrolysis stage on the ribosome. This Aeromonas hydrophila subsp. hydrophila (strain ATCC 7966 / DSM 30187 / BCRC 13018 / CCUG 14551 / JCM 1027 / KCTC 2358 / NCIMB 9240 / NCTC 8049) protein is Elongation factor Ts.